A 382-amino-acid chain; its full sequence is 3-hydroxyisobutyryl-CoA hydrolase, mitochondrial (382 aa).

The substrate site is built by Glu-117, Gly-142, Glu-165, and Asp-173.

Belongs to the enoyl-CoA hydratase/isomerase family.

Its subcellular location is the mitochondrion. The catalysed reaction is 3-hydroxy-2-methylpropanoyl-CoA + H2O = 3-hydroxy-2-methylpropanoate + CoA + H(+). Its pathway is amino-acid degradation; L-valine degradation. Functionally, hydrolyzes 3-hydroxyisobutyryl-CoA (HIBYL-CoA), a saline catabolite. Has high activity toward isobutyryl-CoA. Could be an isobutyryl-CoA dehydrogenase that functions in valine catabolism. Also hydrolyzes 3-hydroxypropanoyl-CoA. The protein is 3-hydroxyisobutyryl-CoA hydrolase, mitochondrial (hibch) of Danio rerio (Zebrafish).